The chain runs to 218 residues: MEWSDVFHEITTRHDFAAMHDFLEKEYTTEIVYPDRKNIYQAFDLTPFEQVKVVILGQDPYHGPNQAHGLAFSVQPDAKFPPSLRNMYKELQDDVGCIRKSPHLQDWAREGVLLLNTVLTVRQGEAHSHKNIGWETFTDEVIQAVSEHLTHVVFILWGKPAQQKIKLIDTSKHHIIQSPHPSPLSAYRGFFGSKPYSQANTYLQANGKQPVNWCESEV.

Asp59 functions as the Proton acceptor in the catalytic mechanism.

It belongs to the uracil-DNA glycosylase (UDG) superfamily. UNG family.

Its subcellular location is the cytoplasm. The enzyme catalyses Hydrolyzes single-stranded DNA or mismatched double-stranded DNA and polynucleotides, releasing free uracil.. In terms of biological role, excises uracil residues from the DNA which can arise as a result of misincorporation of dUMP residues by DNA polymerase or due to deamination of cytosine. This chain is Uracil-DNA glycosylase, found in Staphylococcus saprophyticus subsp. saprophyticus (strain ATCC 15305 / DSM 20229 / NCIMB 8711 / NCTC 7292 / S-41).